We begin with the raw amino-acid sequence, 389 residues long: Phospho-N-acetylmuramoyl-pentapeptide-transferase (389 aa).

The next 10 helical transmembrane spans lie at 25–45 (RAVM…PWVI), 74–94 (MGGV…CDWG), 97–117 (FIWV…VDDY), 134–154 (FFWQ…SVSE), 190–210 (VSYP…IVGS), 222–242 (GLVI…AYVM), 259–279 (AGEL…FLWF), 286–306 (VFMG…VAVI), 311–331 (IVLF…MLQV), and 366–386 (QVTV…LSTL).

It belongs to the glycosyltransferase 4 family. MraY subfamily. Mg(2+) is required as a cofactor.

It is found in the cell inner membrane. It catalyses the reaction UDP-N-acetyl-alpha-D-muramoyl-L-alanyl-gamma-D-glutamyl-meso-2,6-diaminopimeloyl-D-alanyl-D-alanine + di-trans,octa-cis-undecaprenyl phosphate = di-trans,octa-cis-undecaprenyl diphospho-N-acetyl-alpha-D-muramoyl-L-alanyl-D-glutamyl-meso-2,6-diaminopimeloyl-D-alanyl-D-alanine + UMP. It functions in the pathway cell wall biogenesis; peptidoglycan biosynthesis. In terms of biological role, catalyzes the initial step of the lipid cycle reactions in the biosynthesis of the cell wall peptidoglycan: transfers peptidoglycan precursor phospho-MurNAc-pentapeptide from UDP-MurNAc-pentapeptide onto the lipid carrier undecaprenyl phosphate, yielding undecaprenyl-pyrophosphoryl-MurNAc-pentapeptide, known as lipid I. The chain is Phospho-N-acetylmuramoyl-pentapeptide-transferase from Cupriavidus pinatubonensis (strain JMP 134 / LMG 1197) (Cupriavidus necator (strain JMP 134)).